A 197-amino-acid chain; its full sequence is Peptidyl-tRNA hydrolase (197 aa).

Tyr23 serves as a coordination point for tRNA. His28 (proton acceptor) is an active-site residue. Residues Phe73, Asn75, and Asn121 each contribute to the tRNA site.

The protein belongs to the PTH family. In terms of assembly, monomer.

The protein resides in the cytoplasm. The catalysed reaction is an N-acyl-L-alpha-aminoacyl-tRNA + H2O = an N-acyl-L-amino acid + a tRNA + H(+). Hydrolyzes ribosome-free peptidyl-tRNAs (with 1 or more amino acids incorporated), which drop off the ribosome during protein synthesis, or as a result of ribosome stalling. Its function is as follows. Catalyzes the release of premature peptidyl moieties from peptidyl-tRNA molecules trapped in stalled 50S ribosomal subunits, and thus maintains levels of free tRNAs and 50S ribosomes. The sequence is that of Peptidyl-tRNA hydrolase from Frankia alni (strain DSM 45986 / CECT 9034 / ACN14a).